The primary structure comprises 102 residues: MGAIPLEHGLAVAGILFCLGLVGLMVRRNILFVLMSLEVMMNASALAFIVAGARWVQPDGQVMFILVISLAAAEASIGLAILLQLYRRFHTLDIDAASEMRG.

Transmembrane regions (helical) follow at residues 6–26 (LEHG…GLMV), 30–50 (ILFV…AFIV), and 62–82 (VMFI…LAIL).

This sequence belongs to the complex I subunit 4L family. NDH-1 is composed of 13 different subunits. Subunits NuoA, H, J, K, L, M, N constitute the membrane sector of the complex.

The protein localises to the cell inner membrane. It catalyses the reaction a quinone + NADH + 5 H(+)(in) = a quinol + NAD(+) + 4 H(+)(out). Functionally, NDH-1 shuttles electrons from NADH, via FMN and iron-sulfur (Fe-S) centers, to quinones in the respiratory chain. The immediate electron acceptor for the enzyme in this species is believed to be ubiquinone. Couples the redox reaction to proton translocation (for every two electrons transferred, four hydrogen ions are translocated across the cytoplasmic membrane), and thus conserves the redox energy in a proton gradient. The protein is NADH-quinone oxidoreductase subunit K of Pseudomonas putida (strain W619).